The following is a 955-amino-acid chain: Glycine dehydrogenase (decarboxylating) (955 aa).

An N6-(pyridoxal phosphate)lysine modification is found at Lys702.

Belongs to the GcvP family. As to quaternary structure, the glycine cleavage system is composed of four proteins: P, T, L and H. It depends on pyridoxal 5'-phosphate as a cofactor.

The enzyme catalyses N(6)-[(R)-lipoyl]-L-lysyl-[glycine-cleavage complex H protein] + glycine + H(+) = N(6)-[(R)-S(8)-aminomethyldihydrolipoyl]-L-lysyl-[glycine-cleavage complex H protein] + CO2. Functionally, the glycine cleavage system catalyzes the degradation of glycine. The P protein binds the alpha-amino group of glycine through its pyridoxal phosphate cofactor; CO(2) is released and the remaining methylamine moiety is then transferred to the lipoamide cofactor of the H protein. The polypeptide is Glycine dehydrogenase (decarboxylating) (Bordetella avium (strain 197N)).